A 588-amino-acid polypeptide reads, in one-letter code: Arginine--tRNA ligase (588 aa).

A 'HIGH' region motif is present at residues P129 to H139.

This sequence belongs to the class-I aminoacyl-tRNA synthetase family. As to quaternary structure, monomer.

It localises to the cytoplasm. The enzyme catalyses tRNA(Arg) + L-arginine + ATP = L-arginyl-tRNA(Arg) + AMP + diphosphate. In Frankia casuarinae (strain DSM 45818 / CECT 9043 / HFP020203 / CcI3), this protein is Arginine--tRNA ligase.